The following is a 180-amino-acid chain: Large ribosomal subunit protein uL6 (180 aa).

It belongs to the universal ribosomal protein uL6 family. In terms of assembly, part of the 50S ribosomal subunit.

Functionally, this protein binds to the 23S rRNA, and is important in its secondary structure. It is located near the subunit interface in the base of the L7/L12 stalk, and near the tRNA binding site of the peptidyltransferase center. In Salinispora arenicola (strain CNS-205), this protein is Large ribosomal subunit protein uL6.